Consider the following 473-residue polypeptide: Levansucrase (473 aa).

The signal sequence occupies residues Met1 to Ala29. The sucrose site is built by Trp85, Asp86, and Ser164. Catalysis depends on Asp86, which acts as the Nucleophile. Position 241 (Asp241) interacts with Ca(2+). Residues Arg246 and Asp247 each coordinate sucrose. Gln272, Leu308, Asn310, and Asp339 together coordinate Ca(2+). Sucrose is bound at residue Glu340. Glu342 serves as the catalytic Proton donor/acceptor. Arg360 provides a ligand contact to sucrose.

The protein belongs to the glycosyl hydrolase 68 family. Monomer.

Its subcellular location is the secreted. The enzyme catalyses [6)-beta-D-fructofuranosyl-(2-&gt;](n) alpha-D-glucopyranoside + sucrose = [6)-beta-D-fructofuranosyl-(2-&gt;](n+1) alpha-D-glucopyranoside + D-glucose. With respect to regulation, ca(2+) may play an important structural role and promote stability of levansucrase. The enzyme concentration is a factor defining the molecular weight (MW) levan distribution. A bimodal distribution is reported at the usual enzyme concentrations. At low concentrations, the enzyme synthesizes high MW levan, and at high concentrations, it synthesizes low MW levan. Its function is as follows. Catalyzes the synthesis of levan, a fructose polymer, by transferring the fructosyl moiety from sucrose to a growing acceptor molecule. Also displays sucrose hydrolase activity. At low sucrose concentrations, functions as an hydrolase with water as acceptor, whereas at higher substrate concentrations it adds fructosyl units to a growing levan chain. This Bacillus subtilis (strain 168) protein is Levansucrase.